Consider the following 130-residue polypeptide: Capsid protein (130 aa).

The segment at 32-105 is viral RNA-binding; the sequence is EWISSNSRSQ…FATNSDCELI (74 aa).

The protein belongs to the Leviviricetes capsid protein family. In terms of assembly, homodimer. The capsid proteins form dimers that assemble by group of 5. Twelve such pentamers are linked together with free dimers. The homodimers binds to the viral RNA via an operator hairpin, but also to many other RNA sequences in the viral genome; this interaction probably shifts the virus from the replicative to the assembly phase and ensures specific encapsidation of the viral genome.

Its subcellular location is the virion. Its function is as follows. Capsid protein self-assembles to form an icosahedral capsid with a T=3 symmetry, about 26 nm in diameter, and consisting of 89 capsid proteins dimers (178 capsid proteins). Involved in viral genome encapsidation through the interaction between a capsid protein dimer and the multiple packaging signals present in the RNA genome. The capsid also contains 1 copy of the A2 maturation protein. In terms of biological role, acts as a translational repressor of viral replicase synthesis late in infection. This latter function is the result of capsid protein interaction with an RNA hairpin which contains the replicase ribosome-binding site. The sequence is that of Capsid protein from Escherichia coli (Bacteriophage MS2).